The primary structure comprises 209 residues: Large ribosomal subunit protein uL3 (209 aa).

The disordered stretch occupies residues 130 to 162 (RGPMTHGSKFKRAPGSMGASSDPSRTFKNKRMP).

The protein belongs to the universal ribosomal protein uL3 family. In terms of assembly, part of the 50S ribosomal subunit. Forms a cluster with proteins L14 and L19.

In terms of biological role, one of the primary rRNA binding proteins, it binds directly near the 3'-end of the 23S rRNA, where it nucleates assembly of the 50S subunit. This chain is Large ribosomal subunit protein uL3, found in Clostridium botulinum (strain Alaska E43 / Type E3).